Here is a 409-residue protein sequence, read N- to C-terminus: Iron(III) salmochelin esterase (409 aa).

Belongs to the Fes family.

The protein localises to the cytoplasm. It catalyses the reaction Fe(III)-C-5-deoxy-beta-D-glucosyl-enterobactin + H2O = Fe(III)-{di[N-(2,3-dihydroxybenzoyl)-L-seryl]-N-(C-5-[deoxy-beta-D-glucosyl]-2,3-dihydroxybenzoyl)-L-serine} + H(+). It carries out the reaction Fe(III)-{di[N-(2,3-dihydroxybenzoyl)-L-seryl]-N-(C-5-[deoxy-beta-D-glucosyl]-2,3-dihydroxybenzoyl)-L-serine} + H2O + H(+) = Fe(III)-{N-(2,3-dihydroxybenzoyl)-L-seryl-N-(C-5-[deoxy-beta-D-glucosyl]-2,3-dihydroxybenzoyl)-L-serine} + N-(2,3-dihydroxybenzoyl)-L-serine. The catalysed reaction is Fe(III)-{N-(2,3-dihydroxybenzoyl)-L-seryl-[N-(C-5-[deoxy-beta-D-glucosyl]-2,3-dihydroxybenzoyl)-L-serine]2} + H2O + H(+) = Fe(III)-{N-(2,3-dihydroxybenzoyl)-L-seryl-N-(C-5-[deoxy-beta-D-glucosyl]-2,3-dihydroxybenzoyl)-L-serine} + N-(C-5-[deoxy-beta-D-glucosyl]-2,3-dihydroxybenzoyl)-L-serine. The enzyme catalyses Fe(III)-di(C-5-deoxy-beta-D-glucosyl)-enterobactin + H2O = Fe(III)-{N-(2,3-dihydroxybenzoyl)-L-seryl-[N-(C-5-[deoxy-beta-D-glucosyl]-2,3-dihydroxybenzoyl)-L-serine]2} + H(+). It catalyses the reaction Fe(III)-{N-(2,3-dihydroxybenzoyl)-L-seryl-[N-(C-5-[deoxy-beta-D-glucosyl]-2,3-dihydroxybenzoyl)-L-serine]2} + H2O + H(+) = Fe(III)-[N-(C-5-[deoxy-beta-D-glucosyl]-2,3-dihydroxybenzoyl)-L-serine]2 + N-(2,3-dihydroxybenzoyl)-L-serine. It carries out the reaction Fe(III)-[N-(C-5-[deoxy-beta-D-glucosyl]-2,3-dihydroxybenzoyl)-L-serine]2 + H2O + H(+) = Fe(III)-[N-(C-5-[deoxy-beta-D-glucosyl]-2,3-dihydroxybenzoyl)-L-serine] + N-(C-5-[deoxy-beta-D-glucosyl]-2,3-dihydroxybenzoyl)-L-serine. Its function is as follows. Catalyzes the hydrolysis of both the apo and Fe3(+)-bound forms of enterobactin (Ent), monoglucosyl-C-Ent (MGE), diglucosyl-C-Ent (DGE) and triglucosyl-C-Ent (TGE). Shows higher catalytic efficiencies on Fe3(+)-bound forms. The initial linear trimer products are, in turn, very good substrates for further hydrolytic cleavage by IroD, leading to complete degradation of the trilactone to DHB-Ser and/or Glc-DHB-Ser monomers. Hydrolyzes MGE and DGE regioselectively. May be the ferric MGE/DGE esterase responsible for cytoplasmic iron release. This Escherichia coli O6:H1 (strain CFT073 / ATCC 700928 / UPEC) protein is Iron(III) salmochelin esterase.